The primary structure comprises 190 residues: Surfactant protein C (190 aa).

Positions 1–23 (MDVGSKEVLIENPPDYSAAPQGR) are excised as a propeptide. Cys28 is lipidated: S-palmitoyl cysteine. Residues 59–190 (HMSQKHTEMV…LCGEVPLYYI (132 aa)) constitute a propeptide that is removed on maturation. Positions 94–190 (FSIGSTGIVV…LCGEVPLYYI (97 aa)) constitute a BRICHOS domain. An intrachain disulfide couples Cys121 to Cys182.

Its subcellular location is the secreted. It localises to the extracellular space. The protein localises to the surface film. In terms of biological role, pulmonary surfactant associated proteins promote alveolar stability by lowering the surface tension at the air-liquid interface in the peripheral air spaces. This Neovison vison (American mink) protein is Surfactant protein C (SFTPC).